The following is a 303-amino-acid chain: Putative HTH-type transcriptional regulatory protein Mpal_0031 (303 aa).

One can recognise an HTH cro/C1-type domain in the interval 132–189 (LRGLREQRNMSLGDLGAVLGVSRRTISKYESGMGTTLEIAIKIEEVFDSGVIESIDLL). Residues 143 to 162 (LGDLGAVLGVSRRTISKYES) constitute a DNA-binding region (H-T-H motif).

This Methanosphaerula palustris (strain ATCC BAA-1556 / DSM 19958 / E1-9c) protein is Putative HTH-type transcriptional regulatory protein Mpal_0031.